The following is a 235-amino-acid chain: Vacuolar protein sorting-associated protein 60.1 (235 aa).

Residues 1 to 29 (MRRVFGAKKNTEPPPSIQDASDRINKRGD) form a disordered region. Positions 20–29 (ASDRINKRGD) are enriched in basic and acidic residues. The stretch at 99–148 (LKDAQQTMTALKSANKELKGMMKTVKIQDIDNLQDEMMDLMDVSSEIQES) forms a coiled coil. A disordered region spans residues 175 to 235 (MGNETEADGM…PAVPRASLRG (61 aa)).

Belongs to the SNF7 family. As to quaternary structure, interacts with SKD1/VPS4 and LIP5. Interacts with VPS2.2.

The protein resides in the endosome. The protein localises to the multivesicular body membrane. Probable peripherally associated component of the endosomal sorting required for transport complex III (ESCRT-III) which is involved in multivesicular bodies (MVBs) formation and sorting of endosomal cargo proteins into MVBs. This is Vacuolar protein sorting-associated protein 60.1 from Arabidopsis thaliana (Mouse-ear cress).